The sequence spans 351 residues: Photosystem II D2 protein (351 aa).

Residues 39-59 (CAYLAVGGWLTGTTFVTSWYT) form a helical membrane-spanning segment. Histidine 116 contacts chlorophyll a. A helical membrane pass occupies residues 123-139 (GFCLRQFEIARLVGLRP). Positions 128 and 141 each coordinate pheophytin a. The chain crosses the membrane as a helical span at residues 151–164 (VFVSVFLMYPLGQA). Residue histidine 196 coordinates chlorophyll a. Residues 206–226 (GALLCAIHGATVQNTLFEDGD) form a helical membrane-spanning segment. Residues histidine 213 and phenylalanine 260 each coordinate a plastoquinone. Histidine 213 is a binding site for Fe cation. Histidine 267 is a Fe cation binding site. The helical transmembrane segment at 277 to 293 (GLWTSAFGIVGLALNLR) threads the bilayer.

The protein belongs to the reaction center PufL/M/PsbA/D family. PSII is composed of 1 copy each of membrane proteins PsbA, PsbB, PsbC, PsbD, PsbE, PsbF, PsbH, PsbI, PsbJ, PsbK, PsbL, PsbM, PsbT, PsbX, PsbY, PsbZ, Psb30/Ycf12, at least 3 peripheral proteins of the oxygen-evolving complex and a large number of cofactors. It forms dimeric complexes. The D1/D2 heterodimer binds P680, chlorophylls that are the primary electron donor of PSII, and subsequent electron acceptors. It shares a non-heme iron and each subunit binds pheophytin, quinone, additional chlorophylls, carotenoids and lipids. There is also a Cl(-1) ion associated with D1 and D2, which is required for oxygen evolution. The PSII complex binds additional chlorophylls, carotenoids and specific lipids. serves as cofactor.

The protein localises to the plastid. It is found in the chloroplast thylakoid membrane. The enzyme catalyses 2 a plastoquinone + 4 hnu + 2 H2O = 2 a plastoquinol + O2. Its function is as follows. Photosystem II (PSII) is a light-driven water:plastoquinone oxidoreductase that uses light energy to abstract electrons from H(2)O, generating O(2) and a proton gradient subsequently used for ATP formation. It consists of a core antenna complex that captures photons, and an electron transfer chain that converts photonic excitation into a charge separation. The D1/D2 (PsbA/PsbD) reaction center heterodimer binds P680, the primary electron donor of PSII as well as several subsequent electron acceptors. D2 is needed for assembly of a stable PSII complex. This is Photosystem II D2 protein from Pyropia yezoensis (Susabi-nori).